The primary structure comprises 493 residues: UDP-N-acetylmuramoyl-L-alanyl-D-glutamate--2,6-diaminopimelate ligase (493 aa).

Positions 30 and 32 each coordinate UDP-N-acetyl-alpha-D-muramoyl-L-alanyl-D-glutamate. Residue 117–123 (GTNGKTT) coordinates ATP. UDP-N-acetyl-alpha-D-muramoyl-L-alanyl-D-glutamate-binding positions include Asn-158, 159 to 160 (TT), Ser-186, Gln-192, and Arg-194. Residue Lys-226 is modified to N6-carboxylysine. Meso-2,6-diaminopimelate is bound by residues Arg-388, 412–415 (DNPR), Gly-463, and Glu-467. The Meso-diaminopimelate recognition motif signature appears at 412 to 415 (DNPR).

This sequence belongs to the MurCDEF family. MurE subfamily. It depends on Mg(2+) as a cofactor. Carboxylation is probably crucial for Mg(2+) binding and, consequently, for the gamma-phosphate positioning of ATP.

It is found in the cytoplasm. The catalysed reaction is UDP-N-acetyl-alpha-D-muramoyl-L-alanyl-D-glutamate + meso-2,6-diaminopimelate + ATP = UDP-N-acetyl-alpha-D-muramoyl-L-alanyl-gamma-D-glutamyl-meso-2,6-diaminopimelate + ADP + phosphate + H(+). It functions in the pathway cell wall biogenesis; peptidoglycan biosynthesis. Its function is as follows. Catalyzes the addition of meso-diaminopimelic acid to the nucleotide precursor UDP-N-acetylmuramoyl-L-alanyl-D-glutamate (UMAG) in the biosynthesis of bacterial cell-wall peptidoglycan. This is UDP-N-acetylmuramoyl-L-alanyl-D-glutamate--2,6-diaminopimelate ligase from Vibrio parahaemolyticus serotype O3:K6 (strain RIMD 2210633).